A 228-amino-acid chain; its full sequence is 2,3-bisphosphoglycerate-dependent phosphoglycerate mutase (228 aa).

Substrate contacts are provided by residues 8–15, 21–22, Arg58, 111–114, Lys122, 138–139, and 182–183; these read RHGQSVWN, SG, ERMY, RR, and GN. His9 serves as the catalytic Tele-phosphohistidine intermediate. Glu111 acts as the Proton donor/acceptor in catalysis.

The protein belongs to the phosphoglycerate mutase family. BPG-dependent PGAM subfamily.

The enzyme catalyses (2R)-2-phosphoglycerate = (2R)-3-phosphoglycerate. It participates in carbohydrate degradation; glycolysis; pyruvate from D-glyceraldehyde 3-phosphate: step 3/5. Catalyzes the interconversion of 2-phosphoglycerate and 3-phosphoglycerate. In Chlamydia pneumoniae (Chlamydophila pneumoniae), this protein is 2,3-bisphosphoglycerate-dependent phosphoglycerate mutase.